A 198-amino-acid chain; its full sequence is Imidazoleglycerol-phosphate dehydratase (198 aa).

It belongs to the imidazoleglycerol-phosphate dehydratase family.

It localises to the cytoplasm. The catalysed reaction is D-erythro-1-(imidazol-4-yl)glycerol 3-phosphate = 3-(imidazol-4-yl)-2-oxopropyl phosphate + H2O. It functions in the pathway amino-acid biosynthesis; L-histidine biosynthesis; L-histidine from 5-phospho-alpha-D-ribose 1-diphosphate: step 6/9. The chain is Imidazoleglycerol-phosphate dehydratase from Herminiimonas arsenicoxydans.